Here is a 125-residue protein sequence, read N- to C-terminus: Fluoride-specific ion channel FluC (125 aa).

4 helical membrane-spanning segments follow: residues 4 to 24 (PLLAVMIGGCAGCVIRWLLAV), 36 to 56 (GTLLVNLVGGLIIGATVAWFA), 68 to 88 (LITTGLCGGMTTFSTFSLEVV), and 100 to 120 (VISVLTHVTGSLLMTIAGFWL). The Na(+) site is built by Gly-75 and Thr-78.

It belongs to the fluoride channel Fluc/FEX (TC 1.A.43) family.

Its subcellular location is the cell inner membrane. It catalyses the reaction fluoride(in) = fluoride(out). Na(+) is not transported, but it plays an essential structural role and its presence is essential for fluoride channel function. In terms of biological role, fluoride-specific ion channel. Important for reducing fluoride concentration in the cell, thus reducing its toxicity. In Erwinia tasmaniensis (strain DSM 17950 / CFBP 7177 / CIP 109463 / NCPPB 4357 / Et1/99), this protein is Fluoride-specific ion channel FluC.